A 679-amino-acid polypeptide reads, in one-letter code: Shutoff protein (679 aa).

The binding to host EIF4G stretch occupies residues 178 to 232 (LFDYLIGESQDPNDLDSEYKLAFTDEDLPQEGQAEKTKQRETLGAVATFGAVLLS). The RRM domain occupies 235–353 (RLFTHPVVIK…ELAGANYAEA (119 aa)). A phosphotyrosine; by host mark is found at tyrosine 252 and tyrosine 564. Positions 552–679 (REKSILKRGG…SLQGTRRESS (128 aa)) are disordered. The segment covering 661 to 679 (PRQETAEKESLQGTRRESS) has biased composition (basic and acidic residues).

The protein belongs to the adenoviridae shutoff protein family. Monomer. Interacts with hexon protein; this interaction allows chaperoning and trimerization of hexon proteins. Interacts (via N-terminus) with host initiation factor EIF4G (via C-terminus). Interacts (via RRM domain) with viral mRNAs that contain the tripartite leader; this interaction allows ribosome shunting and expression of viral late mRNAs. Might be cleaved by the viral protease. In terms of processing, phosphorylated. Tyrosine phosphorylation enhances preferential binding to tripartite leader mRNAs and allows ribosome shunting. Post-translationally, methylated. Asymmetric dimethylation by host PRMT1 of the Arg/Gly-rich region may regulate shutoff protein binding to hexon and promote the capsid assembly in the nucleus.

It is found in the host cytoplasm. Its function is as follows. Protein that inhibits host translation while promoting late viral translation by ribosome shunting. Blocks host cap-dependent translation by binding to eIF4G, displacing MKNK1 from cap initiation complexes and preventing EIF4E phosphorylation. Binds to the tripartite leader sequence of viral late mRNAs and recruits host eIF4G, PABPC1/poly-A binding protein and 40S ribosomes subunits on viral mRNAs, allowing ribosome shunting and efficient translation of late viral mRNAs even though conventional translation via ribosome scanning from the cap has been shut off in the host cell. During assembly, acts as a chaperone protein that helps hexon proteins assembly into trimers. The polypeptide is Shutoff protein (Snake adenovirus serotype 1 (SnAdV-1)).